The sequence spans 287 residues: Nucleotide-binding protein Ajs_0902 (287 aa).

Residue 10 to 17 participates in ATP binding; the sequence is GMSGSGKS. 59–62 lines the GTP pocket; sequence DVRS.

The protein belongs to the RapZ-like family.

Functionally, displays ATPase and GTPase activities. This is Nucleotide-binding protein Ajs_0902 from Acidovorax sp. (strain JS42).